The primary structure comprises 439 residues: Homogentisate 1,2-dioxygenase (439 aa).

Fe cation contacts are provided by His-335, Glu-341, and His-371.

Belongs to the homogentisate dioxygenase family. Requires Fe cation as cofactor.

It catalyses the reaction homogentisate + O2 = 4-maleylacetoacetate + H(+). Its pathway is amino-acid degradation; L-phenylalanine degradation; acetoacetate and fumarate from L-phenylalanine: step 4/6. The sequence is that of Homogentisate 1,2-dioxygenase from Drosophila melanogaster (Fruit fly).